A 150-amino-acid polypeptide reads, in one-letter code: Large ribosomal subunit protein bL9 (150 aa).

It belongs to the bacterial ribosomal protein bL9 family.

Its function is as follows. Binds to the 23S rRNA. The chain is Large ribosomal subunit protein bL9 from Streptococcus equi subsp. zooepidemicus (strain MGCS10565).